A 326-amino-acid polypeptide reads, in one-letter code: Interleukin-1-binding protein (326 aa).

The N-terminal stretch at 1–18 (MSILPVIFLSIFFYSSFV) is a signal peptide. 3 consecutive Ig-like domains span residues 24-115 (PECI…LNLT), 122-212 (SNID…RIVK), and 221-322 (PSTM…KTVT). Cys48 and Cys99 are joined by a disulfide. Residues Asn80, Asn103, and Asn113 are each glycosylated (N-linked (GlcNAc...) asparagine; by host). A disulfide bond links Cys143 and Cys194. Residues Asn206 and Asn237 are each glycosylated (N-linked (GlcNAc...) asparagine; by host). A disulfide bridge connects residues Cys242 and Cys309.

It belongs to the interleukin-1 receptor family. As to quaternary structure, interacts with mouse Il1b.

The protein localises to the secreted. Functionally, may reduce the host inflammatory response by interacting with inteleukin-1 beta (Il1b) and thus decreasing the association between IL1B and its cellular receptor. In Vaccinia virus (strain Ankara) (VACV), this protein is Interleukin-1-binding protein (OPG201).